A 455-amino-acid chain; its full sequence is Epoxide hydrolase 1 (455 aa).

The chain crosses the membrane as a helical; Signal-anchor for type III membrane protein span at residues 1–21 (MLLELLLASVLGFVIYWFVSG). Residues 22–455 (DKEESLPLED…CKFVGLVERQ (434 aa)) are Cytoplasmic-facing. The active-site Nucleophile is Asp226. Arg295 carries the dimethylated arginine modification. The active-site Proton donor is the Tyr374. His431 (proton acceptor) is an active-site residue.

The protein belongs to the peptidase S33 family.

Its subcellular location is the microsome membrane. The protein resides in the endoplasmic reticulum membrane. The catalysed reaction is cis-stilbene oxide + H2O = (1R,2R)-hydrobenzoin. It catalyses the reaction 1-(4-methoxyphenyl)-N-methyl-N-[(3-methyloxetan-3-yl)methyl]methanamine + H2O = 2-{[(4-methoxybenzyl)(methyl)amino]methyl}-2-methylpropane-1,3-diol. It carries out the reaction 8,9-epoxy-(5Z,11Z,14Z)-eicosatrienoate + H2O = 8,9-dihydroxy-(5Z,11Z,14Z)-eicosatrienoate. The enzyme catalyses 11,12-epoxy-(5Z,8Z,14Z)-eicosatrienoate + H2O = 11,12-dihydroxy-(5Z,8Z,14Z)-eicosatrienoate. The catalysed reaction is 2-(5Z,8Z,11Z,14Z-eicosatetraenoyl)-glycerol + H2O = glycerol + (5Z,8Z,11Z,14Z)-eicosatetraenoate + H(+). Its activity is regulated as follows. Inhibited by 10-hydroxystearamide and methoxy-arachidonyl fluorophosphate. Biotransformation enzyme that catalyzes the hydrolysis of arene and aliphatic epoxides to less reactive and more water soluble dihydrodiols by the trans addition of water. May play a role in the metabolism of endogenous lipids such as epoxide-containing fatty acids. Metabolizes the abundant endocannabinoid 2-arachidonoylglycerol (2-AG) to free arachidonic acid (AA) and glycerol. Binds 20(S)-hydroxycholesterol (20(S)-OHC). This chain is Epoxide hydrolase 1 (EPHX1), found in Oryctolagus cuniculus (Rabbit).